The chain runs to 556 residues: Sensory neuron membrane protein 2 (556 aa).

The Cytoplasmic segment spans residues 1 to 6 (MIHWSL). Residues 7 to 27 (IVSALGVCVAVLGGYCGWILF) form a helical membrane-spanning segment. The Extracellular segment spans residues 28 to 522 (PNMVHKKVEQ…KLINTLKTLN (495 aa)). 4 N-linked (GlcNAc...) asparagine glycosylation sites follow: Asn66, Asn274, Asn310, and Asn324. Intrachain disulfides connect Cys320–Cys388 and Cys349–Cys415. The chain crosses the membrane as a helical span at residues 523 to 543 (IVHWATLCGGIGVAVACLIYY). Residues 544-556 (IYQRGRVVEPPVK) are Cytoplasmic-facing.

It belongs to the CD36 family. As to expression, detected in the head and to a lesser extent in legs and wings.

The protein localises to the cell membrane. Functionally, plays an olfactory role that is not restricted to pheromone sensitivity. The polypeptide is Sensory neuron membrane protein 2 (Drosophila melanogaster (Fruit fly)).